The following is a 197-amino-acid chain: CASP-like protein 1B2 (197 aa).

At Ala-2 the chain carries N-acetylalanine. At 2-17 (AREKIVVAGGSTKSWK) the chain is on the cytoplasmic side. The chain crosses the membrane as a helical span at residues 18 to 38 (LLLGLRVFAFMATLAAAIVMS). Residues 39-69 (LNKETKTLVVATIGTLPIKATLTAKFQDTPA) lie on the Extracellular side of the membrane. Residues 70 to 90 (FVFFVIANVMVSFHNLLMIVL) traverse the membrane as a helical segment. Residues 91-106 (QIFSRKLEYKGVRLLS) are Cytoplasmic-facing. A helical transmembrane segment spans residues 107–127 (IAILDMLNATLVSAAANAAVF). The Extracellular portion of the chain corresponds to 128 to 156 (VAELGKNGNKHAKWNKVCDRFATYCDHGA). A helical transmembrane segment spans residues 157 to 177 (GALIAAFAGVILMLLVSSVSI). The Cytoplasmic portion of the chain corresponds to 178–197 (SRLLINSKHLSTTATTTAVV).

The protein belongs to the Casparian strip membrane proteins (CASP) family. Homodimer and heterodimers.

Its subcellular location is the cell membrane. This chain is CASP-like protein 1B2, found in Arabidopsis lyrata subsp. lyrata (Lyre-leaved rock-cress).